A 312-amino-acid polypeptide reads, in one-letter code: Putative ring-cleaving dioxygenase MhqO (312 aa).

VOC domains follow at residues 7–131 and 152–269; these read GIHH…IVER and GFGG…IATD. Residues His10, His217, and Glu265 each contribute to the Fe cation site.

It belongs to the extradiol ring-cleavage dioxygenase family. Fe(2+) is required as a cofactor.

The protein resides in the cytoplasm. Functionally, putative ring-cleavage dioxygenase that may contribute to the degradation of aromatic compounds. In Bacillus subtilis (strain 168), this protein is Putative ring-cleaving dioxygenase MhqO (mhqO).